The sequence spans 510 residues: Secreted RxLR effector protein 24 (510 aa).

A signal peptide spans 1–18 (MRGAFYVAIALLGSHTAA). The RxLR-dEER motif lies at 47-68 (RVLRERRDSKDKLTVHAGAEER).

The protein belongs to the RxLR effector family.

It is found in the secreted. Its subcellular location is the host nucleus. Its function is as follows. Secreted effector that acts as an elicitor that induces cell death in host plant cells. This chain is Secreted RxLR effector protein 24, found in Plasmopara viticola (Downy mildew of grapevine).